A 479-amino-acid chain; its full sequence is Glutamyl-tRNA(Gln) amidotransferase subunit A (479 aa).

Active-site charge relay system residues include K75 and S150. S174 functions as the Acyl-ester intermediate in the catalytic mechanism.

This sequence belongs to the amidase family. GatA subfamily. In terms of assembly, heterotrimer of A, B and C subunits.

The enzyme catalyses L-glutamyl-tRNA(Gln) + L-glutamine + ATP + H2O = L-glutaminyl-tRNA(Gln) + L-glutamate + ADP + phosphate + H(+). Its function is as follows. Allows the formation of correctly charged Gln-tRNA(Gln) through the transamidation of misacylated Glu-tRNA(Gln) in organisms which lack glutaminyl-tRNA synthetase. The reaction takes place in the presence of glutamine and ATP through an activated gamma-phospho-Glu-tRNA(Gln). This Synechococcus sp. (strain ATCC 27144 / PCC 6301 / SAUG 1402/1) (Anacystis nidulans) protein is Glutamyl-tRNA(Gln) amidotransferase subunit A.